The chain runs to 135 residues: Protein KRTCAP2 homolog (135 aa).

4 consecutive transmembrane segments (helical) span residues 1–21, 35–55, 69–89, and 93–113; these read MAVS…LLFA, PMAI…LTAI, TKLI…SGMV, and CITT…RISI.

It belongs to the KRTCAP2 family. In terms of assembly, component of the oligosaccharyltransferase (OST) complex.

The protein resides in the membrane. Its function is as follows. Subunit of the oligosaccharyl transferase (OST) complex that catalyzes the initial transfer of a defined glycan (Glc(3)Man(9)GlcNAc(2) in eukaryotes) from the lipid carrier dolichol-pyrophosphate to an asparagine residue within an Asn-X-Ser/Thr consensus motif in nascent polypeptide chains, the first step in protein N-glycosylation. N-glycosylation occurs cotranslationally and the complex associates with the Sec61 complex at the channel-forming translocon complex that mediates protein translocation across the endoplasmic reticulum (ER). All subunits are required for a maximal enzyme activity. The protein is Protein KRTCAP2 homolog of Ixodes scapularis (Black-legged tick).